We begin with the raw amino-acid sequence, 327 residues long: Undecaprenyl-phosphate 4-deoxy-4-formamido-L-arabinose transferase (327 aa).

A run of 2 helical transmembrane segments spans residues 236-256 (LSVF…LLVV) and 270-290 (VFML…AMGL).

It belongs to the glycosyltransferase 2 family.

It localises to the cell inner membrane. The enzyme catalyses UDP-4-deoxy-4-formamido-beta-L-arabinose + di-trans,octa-cis-undecaprenyl phosphate = 4-deoxy-4-formamido-alpha-L-arabinopyranosyl di-trans,octa-cis-undecaprenyl phosphate + UDP. It participates in glycolipid biosynthesis; 4-amino-4-deoxy-alpha-L-arabinose undecaprenyl phosphate biosynthesis; 4-amino-4-deoxy-alpha-L-arabinose undecaprenyl phosphate from UDP-4-deoxy-4-formamido-beta-L-arabinose and undecaprenyl phosphate: step 1/2. The protein operates within bacterial outer membrane biogenesis; lipopolysaccharide biosynthesis. Functionally, catalyzes the transfer of 4-deoxy-4-formamido-L-arabinose from UDP to undecaprenyl phosphate. The modified arabinose is attached to lipid A and is required for resistance to polymyxin and cationic antimicrobial peptides. The polypeptide is Undecaprenyl-phosphate 4-deoxy-4-formamido-L-arabinose transferase (Enterobacter sp. (strain 638)).